The primary structure comprises 91 residues: Small ribosomal subunit protein uS19 (91 aa).

This sequence belongs to the universal ribosomal protein uS19 family.

Protein S19 forms a complex with S13 that binds strongly to the 16S ribosomal RNA. The chain is Small ribosomal subunit protein uS19 from Actinobacillus pleuropneumoniae serotype 7 (strain AP76).